The primary structure comprises 149 residues: Large ribosomal subunit protein uL11 (149 aa).

The protein belongs to the universal ribosomal protein uL11 family. In terms of assembly, part of the ribosomal stalk of the 50S ribosomal subunit. Interacts with L10 and the large rRNA to form the base of the stalk. L10 forms an elongated spine to which L12 dimers bind in a sequential fashion forming a multimeric L10(L12)X complex. In terms of processing, one or more lysine residues are methylated.

In terms of biological role, forms part of the ribosomal stalk which helps the ribosome interact with GTP-bound translation factors. The polypeptide is Large ribosomal subunit protein uL11 (Xanthobacter autotrophicus (strain ATCC BAA-1158 / Py2)).